The primary structure comprises 435 residues: Histidinol dehydrogenase (435 aa).

The NAD(+) site is built by Y131, Q189, and N212. Positions 238, 260, and 263 each coordinate substrate. Residues Q260 and H263 each contribute to the Zn(2+) site. Residues E327 and H328 each act as proton acceptor in the active site. Residues H328, D361, E415, and H420 each contribute to the substrate site. Zn(2+) is bound at residue D361. H420 provides a ligand contact to Zn(2+).

It belongs to the histidinol dehydrogenase family. In terms of assembly, homodimer. Requires Zn(2+) as cofactor.

The catalysed reaction is L-histidinol + 2 NAD(+) + H2O = L-histidine + 2 NADH + 3 H(+). It functions in the pathway amino-acid biosynthesis; L-histidine biosynthesis; L-histidine from 5-phospho-alpha-D-ribose 1-diphosphate: step 9/9. Catalyzes the sequential NAD-dependent oxidations of L-histidinol to L-histidinaldehyde and then to L-histidine. The polypeptide is Histidinol dehydrogenase (Buchnera aphidicola subsp. Baizongia pistaciae (strain Bp)).